The sequence spans 360 residues: Variable large protein 14 (360 aa).

The signal sequence occupies residues 1-18 (MRKRISAIIMTLFMVLAS). The N-palmitoyl cysteine moiety is linked to residue cysteine 19. The S-diacylglycerol cysteine moiety is linked to residue cysteine 19.

It belongs to the variable large protein (Vlp) family. Beta subfamily.

The protein localises to the cell outer membrane. In terms of biological role, the Vlp and Vsp proteins are antigenically distinct proteins, only one vlp or vsp gene is transcriptionally active at any one time. Switching between these genes is a mechanism of host immune response evasion. The chain is Variable large protein 14 from Borrelia hermsii.